Reading from the N-terminus, the 418-residue chain is MEVNPPKQEHLLALKVMRLTKPTLFTNIPVTCEEKDLPGDLFNQLMKDDPSTVNGAEILMLGEMLTLPQNFGNIFLGETFSSYISVHNDSNQVVKDILVKADLQTSSQRLNLSASNAAVAELKPDCCIDDVIHHEVKEIGTHILVCAVSYTTQGGEKMYFRKFFKFQVLKPLDVKTKFYNAESDLSSVTDEVFLEAQIQNITTSPMFMEKVSLEPSIMYNVTELNSVNQAGECVSTFGSRGYLQPMDTRQYLYCLKPKKEFAEKAGIIKGVTVIGKLDIVWKTNLGERGRLQTSQLQRMAPGYGDVRLSLEAIPDTVNLEEPFHITCKITNCSSERTMDLVLEMCNTTSIHWCGISGRQLGKLHPSSSLCLALTLLSSVQGLQSVSGLRLTDTFLKRTYEYDDIAQVCVVSAAVEVEA.

Belongs to the TRAPPC13 family. In terms of assembly, part of the multisubunit TRAPP (transport protein particle) complex.

This chain is Trafficking protein particle complex subunit 13 (Trappc13), found in Rattus norvegicus (Rat).